Here is a 280-residue protein sequence, read N- to C-terminus: Phosphatidylglycerol--prolipoprotein diacylglyceryl transferase (280 aa).

The next 4 helical transmembrane spans lie at 30–50 (WYGLAYVVGILLGWFYARRIV), 71–91 (FLLWAAGGIVLGGRIGYILFY), 106–126 (IWNGGMSFHGGLVGTTLAMII), and 132–152 (AIPIWSLFDVVAAVVPIGLFF). Residue R154 participates in a 1,2-diacyl-sn-glycero-3-phospho-(1'-sn-glycerol) binding. The next 3 helical transmembrane spans lie at 188–208 (QLYEAALEGLVLLAVLAWFVY), 217–237 (GLVTGIFVCGYAASRIFVEFF), and 251–271 (WLTMGMVLSVPMALIGIWAIA).

It belongs to the Lgt family.

It localises to the cell inner membrane. The enzyme catalyses L-cysteinyl-[prolipoprotein] + a 1,2-diacyl-sn-glycero-3-phospho-(1'-sn-glycerol) = an S-1,2-diacyl-sn-glyceryl-L-cysteinyl-[prolipoprotein] + sn-glycerol 1-phosphate + H(+). It functions in the pathway protein modification; lipoprotein biosynthesis (diacylglyceryl transfer). Functionally, catalyzes the transfer of the diacylglyceryl group from phosphatidylglycerol to the sulfhydryl group of the N-terminal cysteine of a prolipoprotein, the first step in the formation of mature lipoproteins. In Sinorhizobium medicae (strain WSM419) (Ensifer medicae), this protein is Phosphatidylglycerol--prolipoprotein diacylglyceryl transferase.